A 171-amino-acid polypeptide reads, in one-letter code: Small ribosomal subunit protein uS5 (171 aa).

An S5 DRBM domain is found at 15–78; it reads LEEKVVKINR…EKAKKQLVRI (64 aa).

The protein belongs to the universal ribosomal protein uS5 family. Part of the 30S ribosomal subunit. Contacts proteins S4 and S8.

In terms of biological role, with S4 and S12 plays an important role in translational accuracy. Located at the back of the 30S subunit body where it stabilizes the conformation of the head with respect to the body. The sequence is that of Small ribosomal subunit protein uS5 from Onion yellows phytoplasma (strain OY-M).